The sequence spans 390 residues: Probable tRNA pseudouridine synthase D (390 aa).

Catalysis depends on Asp93, which acts as the Nucleophile. One can recognise a TRUD domain in the interval 166-353 (HVLNYFGIQR…YGTRRKLITP (188 aa)).

Belongs to the pseudouridine synthase TruD family.

The enzyme catalyses uridine(13) in tRNA = pseudouridine(13) in tRNA. Could be responsible for synthesis of pseudouridine from uracil-13 in transfer RNAs. The sequence is that of Probable tRNA pseudouridine synthase D from Methanococcus vannielii (strain ATCC 35089 / DSM 1224 / JCM 13029 / OCM 148 / SB).